A 392-amino-acid chain; its full sequence is MKFVDEATILVVAGDGGNGCVSFRREKYIPRGGPDGGDGGDGGDVWLEADENLNTLIDYRFEKSFRAERGQNGQSRDCTGKRGKDVTVKVPVGTRVIDQGTGETLGDMTKHGQRLMVGKGGWHGLGNSRFKSSVNRSPRQKTMGTPGDKRDLQLELMLLADVGMLGMPNAGKSTFIRSVSAAKPKVADYPFTTLVPSLGVVRMDNEKSFVVADIPGLIEGAAEGAGLGIRFLKHLERCRVLLHLIDIDPIDGSDPVENARIIVGELEKYSDKLAAKPRWLVFNKIDLMDKAEAEAKAKAIAEAMGWEDKYYLISAASQMGVKDLCWDVMAFIIENPITQAEEAKQPEKVEFMWDDYHRQQLEEQEVEVEDDEEWDEDWDEDDEEGVEFIYKR.

The 159-residue stretch at 1–159 folds into the Obg domain; sequence MKFVDEATIL…RDLQLELMLL (159 aa). Residues 127–148 are disordered; the sequence is NSRFKSSVNRSPRQKTMGTPGD. The span at 129–143 shows a compositional bias: polar residues; it reads RFKSSVNRSPRQKTM. The 174-residue stretch at 160 to 333 folds into the OBG-type G domain; the sequence is ADVGMLGMPN…LCWDVMAFII (174 aa). Residues 166-173, 191-195, 213-216, 283-286, and 314-316 contribute to the GTP site; these read GMPNAGKS, FTTLV, DIPG, NKID, and SAA. Ser-173 and Thr-193 together coordinate Mg(2+). Acidic residues predominate over residues 363-386; that stretch reads EQEVEVEDDEEWDEDWDEDDEEGV. The tract at residues 363–392 is disordered; the sequence is EQEVEVEDDEEWDEDWDEDDEEGVEFIYKR.

The protein belongs to the TRAFAC class OBG-HflX-like GTPase superfamily. OBG GTPase family. In terms of assembly, monomer. It depends on Mg(2+) as a cofactor.

Its subcellular location is the cytoplasm. Its function is as follows. An essential GTPase which binds GTP, GDP and possibly (p)ppGpp with moderate affinity, with high nucleotide exchange rates and a fairly low GTP hydrolysis rate. Plays a role in control of the cell cycle, stress response, ribosome biogenesis and in those bacteria that undergo differentiation, in morphogenesis control. The protein is GTPase Obg of Enterobacter sp. (strain 638).